The following is a 258-amino-acid chain: Small ribosomal subunit protein mS40 (258 aa).

The N-terminal 35 residues, 1–35 (MAASVLNVLLRRLPYFSPFRGAYGVQVPLQTLCTK), are a transit peptide targeting the mitochondrion. S49 bears the Phosphoserine mark. The segment at 221 to 258 (QGHLREESGPPPESMPKVPLTAPNEATSTEQAGPQSAL) is disordered. The segment covering 244-258 (NEATSTEQAGPQSAL) has biased composition (polar residues).

This sequence belongs to the bacterial ribosomal protein bS18 family. Mitochondrion-specific ribosomal protein mS40 subfamily. As to quaternary structure, component of the mitochondrial ribosome small subunit (28S) which comprises a 12S rRNA and about 30 distinct proteins.

It is found in the mitochondrion. The sequence is that of Small ribosomal subunit protein mS40 from Bos taurus (Bovine).